The chain runs to 451 residues: Speckle-type POZ protein homolog (451 aa).

A disordered region spans residues 51 to 75; sequence EVVSSGSGNSAHGRSISPSPSSASH. Over residues 60–75 the composition is skewed to low complexity; the sequence is SAHGRSISPSPSSASH. Positions 95–225 constitute an MATH domain; it reads KFNYMWTINN…GDRLSIFCEV (131 aa). The BTB domain occupies 265-338; the sequence is SDFTLVCKSD…MYTGQTKYIE (74 aa).

It belongs to the Tdpoz family.

The protein resides in the nucleus. Its subcellular location is the nucleus speckle. The protein operates within protein modification; protein ubiquitination. Mediates ubiquitination and proteasomal degradation of target proteins, most likely in complex with cul-3. May promote the degradation of bromodomain-containing proteins such as bet-1. This chain is Speckle-type POZ protein homolog, found in Caenorhabditis elegans.